Reading from the N-terminus, the 123-residue chain is MVRATGSVASRSRRKRVLKQAKGFWGDRKGHFRQSRSSVMRAMAFNYMHRKDRKGDFRSLWITRLNVASRIHGLSYSRLINGLKQAGIHLNRKMLSEMAIHDPQGFAVVATQAKLALEAAVQG.

It belongs to the bacterial ribosomal protein bL20 family.

Its function is as follows. Binds directly to 23S ribosomal RNA and is necessary for the in vitro assembly process of the 50S ribosomal subunit. It is not involved in the protein synthesizing functions of that subunit. The chain is Large ribosomal subunit protein bL20 from Chlamydia trachomatis serovar L2b (strain UCH-1/proctitis).